We begin with the raw amino-acid sequence, 365 residues long: 2-aminoethylphosphonate--pyruvate transaminase (365 aa).

Lys-194 carries the post-translational modification N6-(pyridoxal phosphate)lysine.

Belongs to the class-V pyridoxal-phosphate-dependent aminotransferase family. PhnW subfamily. Homodimer. The cofactor is pyridoxal 5'-phosphate.

The catalysed reaction is (2-aminoethyl)phosphonate + pyruvate = phosphonoacetaldehyde + L-alanine. Functionally, involved in phosphonate degradation. The polypeptide is 2-aminoethylphosphonate--pyruvate transaminase (Bacillus cytotoxicus (strain DSM 22905 / CIP 110041 / 391-98 / NVH 391-98)).